Consider the following 250-residue polypeptide: Adenosylcobinamide-GDP ribazoletransferase (250 aa).

6 helical membrane-spanning segments follow: residues 31-51 (ISYL…VYFV), 55-75 (FILG…ITGA), 106-126 (VGTN…AVLN), 133-153 (IIIA…LLMC), 187-207 (IGYV…VLFI), and 230-250 (NEIA…CGLL).

This sequence belongs to the CobS family. The cofactor is Mg(2+).

Its subcellular location is the cell membrane. It catalyses the reaction alpha-ribazole + adenosylcob(III)inamide-GDP = adenosylcob(III)alamin + GMP + H(+). It carries out the reaction alpha-ribazole 5'-phosphate + adenosylcob(III)inamide-GDP = adenosylcob(III)alamin 5'-phosphate + GMP + H(+). It participates in cofactor biosynthesis; adenosylcobalamin biosynthesis; adenosylcobalamin from cob(II)yrinate a,c-diamide: step 7/7. Functionally, joins adenosylcobinamide-GDP and alpha-ribazole to generate adenosylcobalamin (Ado-cobalamin). Also synthesizes adenosylcobalamin 5'-phosphate from adenosylcobinamide-GDP and alpha-ribazole 5'-phosphate. The protein is Adenosylcobinamide-GDP ribazoletransferase of Clostridium novyi (strain NT).